A 503-amino-acid chain; its full sequence is Zinc finger protein JACKDAW (503 aa).

Residues 32–51 (IPDLNPNSNPNPNAKPNSSS) show a composition bias toward low complexity. Residues 32–68 (IPDLNPNSNPNPNAKPNSSSAKKKRNQPGTPDPDADV) are disordered. S72 carries the phosphoserine modification. 2 consecutive C2H2-type zinc fingers follow at residues 82–104 (FVCE…RRGH) and 124–154 (YICP…SRKH). 2 short sequence motifs (nuclear localization signal) span residues 100–107 (HRRGHNLP) and 146–153 (IKKHYSRK). A C2H2-type 2; degenerate zinc finger spans residues 159–182 (WKCEKCSKKYAVQSDWKAHAKTCG). The Zn(2+) site is built by C161, C164, H177, C181, C188, C190, H203, and C207. Residues 186-209 (YKCDCGTLFSRKDSFITHRAFCDA) form a CCHC-type 2; atypical zinc finger. The interval 196–208 (RKDSFITHRAFCD) is SHR-binding. 2 disordered regions span residues 301-417 (SSSS…SSPM) and 432-465 (RENH…LNPA). Positions 319–358 (TSTNPSLTLSSSSTSQQTSASLQHQTLKDSSFSPLFSSSS) are enriched in low complexity. Residues 381-392 (MGSTRSNSSTAP) are compositionally biased toward polar residues. A compositionally biased stretch (low complexity) spans 396 to 407 (AGPTMTSSSATA). Residues 444 to 465 (GVSTSSVDNNPFQSNRSGLNPA) show a composition bias toward polar residues.

In terms of assembly, interacts with SHR, SCR, MGP and itself. The heterodimer with SHR involves its zinc fingers. Interacts with SIEL. Binds to RGA and SCL3 competitively in the nucleus. Expressed in the quiescent center, the ground tissue stem cells and to a lesser extent in mature cortex and endodermis cells.

The protein resides in the nucleus. Transcription factor that, together with BIB, regulates tissue boundaries and asymmetric cell division by a rapid up-regulation of 'SCARECROW' (SCR), thus controlling the nuclear localization of 'SHORT-ROOT' (SHR) and restricting its action. Binds DNA via its zinc fingers. Recognizes and binds to SCL3 promoter sequence 5'-AGACAA-3' to promote its expression when in complex with RGA. Confines CYCD6 expression to the cortex-endodermis initial/daughter (CEI/CEID) tissues. Required for radial patterning and stem cell maintenance. Counteracted by 'MAGPIE' (MGP). Binds to the SCR and MGP promoter sequences. Controls position-dependent signals that regulate epidermal-cell-type patterning. The sequence is that of Zinc finger protein JACKDAW from Arabidopsis thaliana (Mouse-ear cress).